The primary structure comprises 595 residues: Merlin (595 aa).

Ser-13 is subject to Phosphoserine. The 290-residue stretch at 22–311 (FTVRIVTMDA…GNHDLFMRRR (290 aa)) folds into the FERM domain. Phosphoserine; by PAK is present on Ser-518.

Interacts with NHERF1, HGS and AGAP2. Interacts with LAYN. Interacts with SGSM3. Interacts (via FERM domain) with MPP1. Interacts with WWC1. Interacts with the CUL4A-RBX1-DDB1-VprBP/DCAF1 E3 ubiquitin-protein ligase complex. The unphosphorylated form interacts (via FERM domain) with VPRBP/DCAF1. Interacts (via FERM domain) with NOP53; the interaction is direct. Interacts with SCHIP1; the interaction is direct. In terms of processing, phosphorylation of Ser-518 inhibits nuclear localization by disrupting the intramolecular association of the FERM domain with the C-terminal tail. The dephosphorylation of Ser-518 favors the interaction with NOP53. Post-translationally, ubiquitinated by the CUL4A-RBX1-DDB1-DCAF1/VprBP E3 ubiquitin-protein ligase complex for ubiquitination and subsequent proteasome-dependent degradation. In terms of tissue distribution, widely expressed. Isoform 1 and isoform 3 are predominant. Isoform 4, isoform 5 and isoform 6 are expressed moderately. Isoform 8 is found at low frequency. Isoform 7, isoform 9 and isoform 10 are not expressed in adult tissues, with the exception of adult retina expressing isoform 10. Isoform 9 is faintly expressed in fetal brain, heart, lung, skeletal muscle and spleen. Fetal thymus expresses isoforms 1, 7, 9 and 10 at similar levels.

Its subcellular location is the cell projection. It localises to the filopodium membrane. The protein localises to the ruffle membrane. The protein resides in the nucleus. It is found in the cytoplasm. Its subcellular location is the perinuclear region. It localises to the cytoplasmic granule. The protein localises to the cytoskeleton. Probable regulator of the Hippo/SWH (Sav/Wts/Hpo) signaling pathway, a signaling pathway that plays a pivotal role in tumor suppression by restricting proliferation and promoting apoptosis. Along with WWC1 can synergistically induce the phosphorylation of LATS1 and LATS2 and can probably function in the regulation of the Hippo/SWH (Sav/Wts/Hpo) signaling pathway. May act as a membrane stabilizing protein. May inhibit PI3 kinase by binding to AGAP2 and impairing its stimulating activity. Suppresses cell proliferation and tumorigenesis by inhibiting the CUL4A-RBX1-DDB1-VprBP/DCAF1 E3 ubiquitin-protein ligase complex. The polypeptide is Merlin (NF2) (Homo sapiens (Human)).